The primary structure comprises 354 residues: Endo-1,4-beta-xylanase 1 (354 aa).

Residues 19 to 339 form the GH10 domain; the sequence is SGLDAAMKAA…KPSYTSSLNT (321 aa). Asn-117 is a glycosylation site (N-linked (GlcNAc...) asparagine). Glu-147 functions as the Proton donor in the catalytic mechanism. Glu-261 (nucleophile) is an active-site residue. Residues Cys-289 and Cys-295 are joined by a disulfide bond.

It belongs to the glycosyl hydrolase 10 (cellulase F) family.

It is found in the secreted. The catalysed reaction is Endohydrolysis of (1-&gt;4)-beta-D-xylosidic linkages in xylans.. Its pathway is glycan degradation; xylan degradation. Endo-1,4-beta-xylanase involved in the hydrolysis of xylan, a major structural heterogeneous polysaccharide found in plant biomass representing the second most abundant polysaccharide in the biosphere, after cellulose. Plays an important role in causing fusarium head blight (FHB) on cereal crops. This chain is Endo-1,4-beta-xylanase 1 (XYL1), found in Gibberella zeae (strain ATCC MYA-4620 / CBS 123657 / FGSC 9075 / NRRL 31084 / PH-1) (Wheat head blight fungus).